The primary structure comprises 692 residues: Elongation factor G (692 aa).

In terms of domain architecture, tr-type G spans 8-283 (NRIRNIGIAA…AVIDYLPAPT (276 aa)). Residues 17–24 (AHIDAGKT), 81–85 (DTPGH), and 135–138 (NKMD) contribute to the GTP site.

This sequence belongs to the TRAFAC class translation factor GTPase superfamily. Classic translation factor GTPase family. EF-G/EF-2 subfamily.

It is found in the cytoplasm. Functionally, catalyzes the GTP-dependent ribosomal translocation step during translation elongation. During this step, the ribosome changes from the pre-translocational (PRE) to the post-translocational (POST) state as the newly formed A-site-bound peptidyl-tRNA and P-site-bound deacylated tRNA move to the P and E sites, respectively. Catalyzes the coordinated movement of the two tRNA molecules, the mRNA and conformational changes in the ribosome. This Helicobacter pylori (strain ATCC 700392 / 26695) (Campylobacter pylori) protein is Elongation factor G (fusA).